A 356-amino-acid polypeptide reads, in one-letter code: 3-isopropylmalate dehydrogenase (356 aa).

Substrate-binding residues include arginine 95, arginine 105, arginine 133, and aspartate 223. Mg(2+) contacts are provided by aspartate 223, aspartate 247, and aspartate 251. 281-293 (GSAPDIAGQNKAN) is an NAD(+) binding site.

This sequence belongs to the isocitrate and isopropylmalate dehydrogenases family. LeuB type 1 subfamily. Homodimer. It depends on Mg(2+) as a cofactor. Mn(2+) is required as a cofactor.

The protein resides in the cytoplasm. The catalysed reaction is (2R,3S)-3-isopropylmalate + NAD(+) = 4-methyl-2-oxopentanoate + CO2 + NADH. It functions in the pathway amino-acid biosynthesis; L-leucine biosynthesis; L-leucine from 3-methyl-2-oxobutanoate: step 3/4. Its function is as follows. Catalyzes the oxidation of 3-carboxy-2-hydroxy-4-methylpentanoate (3-isopropylmalate) to 3-carboxy-4-methyl-2-oxopentanoate. The product decarboxylates to 4-methyl-2 oxopentanoate. The sequence is that of 3-isopropylmalate dehydrogenase from Neisseria meningitidis serogroup A / serotype 4A (strain DSM 15465 / Z2491).